Reading from the N-terminus, the 310-residue chain is tRNA dimethylallyltransferase (310 aa).

11-18 (GPTGVGKT) contacts ATP. 13–18 (TGVGKT) provides a ligand contact to substrate.

It belongs to the IPP transferase family. As to quaternary structure, monomer. Mg(2+) is required as a cofactor.

It catalyses the reaction adenosine(37) in tRNA + dimethylallyl diphosphate = N(6)-dimethylallyladenosine(37) in tRNA + diphosphate. Its function is as follows. Catalyzes the transfer of a dimethylallyl group onto the adenine at position 37 in tRNAs that read codons beginning with uridine, leading to the formation of N6-(dimethylallyl)adenosine (i(6)A). The protein is tRNA dimethylallyltransferase of Latilactobacillus sakei subsp. sakei (strain 23K) (Lactobacillus sakei subsp. sakei).